A 296-amino-acid chain; its full sequence is L-ornithine N(alpha)-acyltransferase (296 aa).

This sequence belongs to the acetyltransferase family. OlsB subfamily.

It carries out the reaction a (3R)-hydroxyacyl-[ACP] + L-ornithine = a lyso-ornithine lipid + holo-[ACP] + H(+). The protein operates within lipid metabolism. Functionally, catalyzes the first step in the biosynthesis of ornithine lipids, which are phosphorus-free membrane lipids. Catalyzes the 3-hydroxyacyl-acyl carrier protein-dependent acylation of ornithine to form lyso-ornithine lipid (LOL). This Rhizobium meliloti (strain 1021) (Ensifer meliloti) protein is L-ornithine N(alpha)-acyltransferase.